Reading from the N-terminus, the 432-residue chain is Adenylosuccinate synthetase 2 (432 aa).

Residues 13-19 and 41-43 each bind GTP; these read GDEGKGK and GHT. The active-site Proton acceptor is Asp-14. Residues Asp-14 and Gly-41 each contribute to the Mg(2+) site. Residues 14–17, 39–42, Thr-130, Arg-144, Gln-225, Thr-240, and Arg-304 contribute to the IMP site; these read DEGK and NAGH. The active-site Proton donor is His-42. A substrate-binding site is contributed by 300–306; sequence ATTGRSR. GTP contacts are provided by residues Arg-306, 332–334, and 415–417; these read KLD and STG.

It belongs to the adenylosuccinate synthetase family. In terms of assembly, homodimer. Mg(2+) serves as cofactor.

Its subcellular location is the cytoplasm. The catalysed reaction is IMP + L-aspartate + GTP = N(6)-(1,2-dicarboxyethyl)-AMP + GDP + phosphate + 2 H(+). It functions in the pathway purine metabolism; AMP biosynthesis via de novo pathway; AMP from IMP: step 1/2. Functionally, plays an important role in the de novo pathway of purine nucleotide biosynthesis. Catalyzes the first committed step in the biosynthesis of AMP from IMP. This is Adenylosuccinate synthetase 2 from Photorhabdus laumondii subsp. laumondii (strain DSM 15139 / CIP 105565 / TT01) (Photorhabdus luminescens subsp. laumondii).